The chain runs to 862 residues: Protein argonaute-2 (862 aa).

The PAZ domain occupies 232–351 (PVIEFMCEVL…LPLEVCNIVA (120 aa)). Interaction with guide RNA regions lie at residues 314–319 (YFKDRH) and 527–569 (GKTP…LCLK). Positions 520–821 (LVVVILPGKT…VAFRARYHLV (302 aa)) constitute a Piwi domain. Residues 590–593 (FQQP) are interaction with GW182 family members. Asp600 contacts a divalent metal cation. An interaction with GW182 family members region spans residues 653-663 (LIQFYKSTRFK). Asp672 provides a ligand contact to a divalent metal cation. Interaction with guide RNA stretches follow at residues 712-713 (KR), 756-764 (HAGIQGTSR), and 793-815 (YVRCTRSVSIPAPAYYAHLVAFR). His810 contacts a divalent metal cation. The disordered stretch occupies residues 825–847 (HDSAEGSHTSGQSNGRDQQALAK). The span at 830-841 (GSHTSGQSNGRD) shows a compositional bias: polar residues.

Belongs to the argonaute family. Ago subfamily. As to quaternary structure, component of the RISC loading complex (RLC), or micro-RNA (miRNA) loading complex (miRLC), which is composed of dicer1, ago2 and tarbp2. Note that the trimeric RLC/miRLC is also referred to as RISC. It depends on Mg(2+) as a cofactor. The cofactor is Mn(2+).

It localises to the cytoplasm. The protein localises to the P-body. The catalysed reaction is Endonucleolytic cleavage to 5'-phosphomonoester.. In terms of biological role, required for RNA-mediated gene silencing (RNAi) by the RNA-induced silencing complex (RISC). The 'minimal RISC' appears to include ago2 bound to a short guide RNA such as a microRNA (miRNA) or short interfering RNA (siRNA). These guide RNAs direct RISC to complementary mRNAs that are targets for RISC-mediated gene silencing. The precise mechanism of gene silencing depends on the degree of complementarity between the miRNA or siRNA and its target. Binding of RISC to a perfectly complementary mRNA generally results in silencing due to endonucleolytic cleavage of the mRNA specifically by ago2. Binding of RISC to a partially complementary mRNA results in silencing through inhibition of translation, and this is independent of endonuclease activity. The inhibition of translational initiation leads to the accumulation of the affected mRNA in cytoplasmic processing bodies (P-bodies), where mRNA degradation may subsequently occur. The protein is Protein argonaute-2 (ago2) of Xenopus laevis (African clawed frog).